The chain runs to 827 residues: Cell surface glycoprotein (827 aa).

Residues 1-34 (MTKLKDQTRAILLATLMVTSVFAGAIAFTGSAAA) form the signal peptide. Asn47 is a glycosylation site (N-linked (Glc...) asparagine). Residues 73-102 (PLLTGTAGNSEGVSLDLSSPIPQTTENQPL) show a composition bias toward polar residues. Residues 73-111 (PLLTGTAGNSEGVSLDLSSPIPQTTENQPLGTYDVDGSG) form a disordered region. Asn117, Asn308, Asn313, Asn532, and Asn766 each carry an N-linked (Glc...) asparagine glycan. The segment at 755 to 804 (SEREDTTTSSDNATDTTTTTDGPTETTTTAEPTETTEEPTEETTTSSNTP) is disordered. Residues 761–787 (TTSSDNATDTTTTTDGPTETTTTAEPT) show a composition bias toward low complexity. The short motif at 804–806 (PGF) is the PGF sorting signal element. A helical membrane pass occupies residues 804 to 823 (PGFGIAVALVALVGAALLAL).

The protein belongs to the halobacterial S-layer protein family. O-glycosylated on 4 to 6 threonine residues; glycans consist of Glc-Gal disaccharides. Post-translationally, the N-terminus is not blocked. In terms of processing, cleaved by the archaeosortase ArtA at the C-terminus, with removal of a short hydrophobic segment. Lipidation: Following protein translocation across the membrane, the protein is modified by a derivative of mevalonic acid. Lipid modification is ArtA-dependent and requires the conserved C-terminal PGF motif. Post-translationally, asn-47 and Asn-117 are glycosylated by a pentasaccharide comprising a hexose, 2 hexuronic acids, a methyl ester of a hexuronic acid and mannose. The pentasaccharide is produced in 2 steps: first, a tetrasaccharide is built on dolichol-P and then transferred to the S-layer glycoprotein. Then, the mannose fifth sugar is attached to a distinct molecule of dolichol-P and is transferred to the protein already carrying the tetrasaccharide. The pentasaccharide on Asn-47 was initially thought to contain mannose, galactose, glucose and idose with a relative ratio of 1/3/3/0.2. However, it was later shown that it is not the case. Under low-salt conditions (1.75 M instead of 3.4 M), a tetrasaccharide consisting of a sulfated hexose, 2 hexoses and rhamnose is attached to Asn-532.

The protein resides in the secreted. The protein localises to the cell wall. It is found in the S-layer. It localises to the cell membrane. Its function is as follows. S-layer protein. The S-layer is a paracrystalline mono-layered assembly of proteins which coat the surface of the cell. In Haloferax volcanii (strain ATCC 29605 / DSM 3757 / JCM 8879 / NBRC 14742 / NCIMB 2012 / VKM B-1768 / DS2) (Halobacterium volcanii), this protein is Cell surface glycoprotein (csg).